The primary structure comprises 396 residues: Elongation factor Tu 2 (396 aa).

Residues 10-206 (KPHVNVGTIG…ALDTYIPTPE (197 aa)) form the tr-type G domain. A G1 region spans residues 19–26 (GHVDHGKT). Residue 19-26 (GHVDHGKT) participates in GTP binding. A Mg(2+)-binding site is contributed by Thr26. Positions 60–64 (GITIN) are G2. The G3 stretch occupies residues 81 to 84 (DCPG). Residues 81-85 (DCPGH) and 136-139 (NKCD) contribute to the GTP site. A G4 region spans residues 136–139 (NKCD). Residues 174–176 (SAK) are G5.

This sequence belongs to the TRAFAC class translation factor GTPase superfamily. Classic translation factor GTPase family. EF-Tu/EF-1A subfamily. In terms of assembly, monomer.

Its subcellular location is the cytoplasm. The enzyme catalyses GTP + H2O = GDP + phosphate + H(+). In terms of biological role, GTP hydrolase that promotes the GTP-dependent binding of aminoacyl-tRNA to the A-site of ribosomes during protein biosynthesis. The sequence is that of Elongation factor Tu 2 from Acidovorax sp. (strain JS42).